We begin with the raw amino-acid sequence, 456 residues long: Gamma-aminobutyric acid receptor subunit alpha-1 (456 aa).

The first 27 residues, 1-27 (MRKSPGLSDYLWAWILLLSTLTGRSYG), serve as a signal peptide directing secretion. Topologically, residues 28–253 (QPSLQDELKD…FHLKRKIGYF (226 aa)) are extracellular. Residue N38 is glycosylated (N-linked (GlcNAc...) asparagine). Position 94 (R94) interacts with 4-aminobutanoate. A glycan (N-linked (GlcNAc...) asparagine) is linked at N138. T157 contributes to the 4-aminobutanoate binding site. A disulfide bridge links C166 with C180. The chain crosses the membrane as a helical span at residues 254 to 274 (VIQTYLPCIMTVILSQVSFWL). At 275-279 (NRESV) the chain is on the cytoplasmic side. A helical membrane pass occupies residues 280–301 (PARTVFGVTTVLTMTTLSISAR). The Extracellular portion of the chain corresponds to 302–311 (NSLPKVAYAT). A helical transmembrane segment spans residues 312–333 (AMDWFIAVCYAFVFSALIEFAT). Topologically, residues 334–421 (VNYFTKRGYA…TFNSVSKIDR (88 aa)) are cytoplasmic. The chain crosses the membrane as a helical span at residues 422–441 (LSRIAFPLLFGIFNLVYWAT). At 442 to 456 (YLNREPQLKAPTPHQ) the chain is on the extracellular side.

This sequence belongs to the ligand-gated ion channel (TC 1.A.9) family. Gamma-aminobutyric acid receptor (TC 1.A.9.5) subfamily. GABRA1 sub-subfamily. Heteropentamer, formed by a combination of alpha (GABRA1-6), beta (GABRB1-3), gamma (GABRG1-3), delta (GABRD), epsilon (GABRE), rho (GABRR1-3), pi (GABRP) and theta (GABRQ) subunits, each subunit exhibiting distinct physiological and pharmacological properties. Interacts with UBQLN1. Interacts with TRAK1. Interacts with KIF21B. Identified in a complex of 720 kDa composed of LHFPL4, NLGN2, GABRA1, GABRB2, GABRG2 and GABRB3. Interacts with LHFPL4. Interacts with NLGN2. Interacts with SHISA7; interaction leads to the regulation of GABA(A) receptor trafficking, channel deactivation kinetics and pharmacology.

It localises to the postsynaptic cell membrane. The protein localises to the cell membrane. The protein resides in the cytoplasmic vesicle membrane. It carries out the reaction chloride(in) = chloride(out). Its activity is regulated as follows. Allosterically activated by benzodiazepines, the neuroanesthetic alphaxalone and pentobarbital. Inhibited by the antagonist bicuculline. Potentiated by histamine. Functionally, alpha subunit of the heteropentameric ligand-gated chloride channel gated by gamma-aminobutyric acid (GABA), a major inhibitory neurotransmitter in the brain. GABA-gated chloride channels, also named GABA(A) receptors (GABAAR), consist of five subunits arranged around a central pore and contain GABA active binding site(s) located at the alpha and beta subunit interface(s). When activated by GABA, GABAARs selectively allow the flow of chloride anions across the cell membrane down their electrochemical gradient. Alpha-1/GABRA1-containing GABAARs are largely synaptic. Chloride influx into the postsynaptic neuron following GABAAR opening decreases the neuron ability to generate a new action potential, thereby reducing nerve transmission. GABAARs containing alpha-1 and beta-2 or -3 subunits exhibit synaptogenic activity; the gamma-2 subunit being necessary but not sufficient to induce rapid synaptic contacts formation. GABAARs function also as histamine receptor where histamine binds at the interface of two neighboring beta subunits and potentiates GABA response. GABAARs containing alpha, beta and epsilon subunits also permit spontaneous chloride channel activity while preserving the structural information required for GABA-gated openings. Alpha-1-mediated plasticity in the orbitofrontal cortex regulates context-dependent action selection. Together with rho subunits, may also control neuronal and glial GABAergic transmission in the cerebellum. The chain is Gamma-aminobutyric acid receptor subunit alpha-1 (GABRA1) from Macaca fascicularis (Crab-eating macaque).